Consider the following 325-residue polypeptide: Lipoyl synthase (325 aa).

The segment at 1–33 (MATVIDTLKARGSEDRAARHPEKQNRPDTPVLR) is disordered. Residues 8–33 (LKARGSEDRAARHPEKQNRPDTPVLR) show a composition bias toward basic and acidic residues. Cys64, Cys69, Cys75, Cys90, Cys94, Cys97, and Ser303 together coordinate [4Fe-4S] cluster. In terms of domain architecture, Radical SAM core spans 76–292 (WSQKHATMMI…EAIARAKGFL (217 aa)).

Belongs to the radical SAM superfamily. Lipoyl synthase family. Requires [4Fe-4S] cluster as cofactor.

The protein resides in the cytoplasm. It catalyses the reaction [[Fe-S] cluster scaffold protein carrying a second [4Fe-4S](2+) cluster] + N(6)-octanoyl-L-lysyl-[protein] + 2 oxidized [2Fe-2S]-[ferredoxin] + 2 S-adenosyl-L-methionine + 4 H(+) = [[Fe-S] cluster scaffold protein] + N(6)-[(R)-dihydrolipoyl]-L-lysyl-[protein] + 4 Fe(3+) + 2 hydrogen sulfide + 2 5'-deoxyadenosine + 2 L-methionine + 2 reduced [2Fe-2S]-[ferredoxin]. It functions in the pathway protein modification; protein lipoylation via endogenous pathway; protein N(6)-(lipoyl)lysine from octanoyl-[acyl-carrier-protein]: step 2/2. In terms of biological role, catalyzes the radical-mediated insertion of two sulfur atoms into the C-6 and C-8 positions of the octanoyl moiety bound to the lipoyl domains of lipoate-dependent enzymes, thereby converting the octanoylated domains into lipoylated derivatives. The chain is Lipoyl synthase from Caulobacter vibrioides (strain ATCC 19089 / CIP 103742 / CB 15) (Caulobacter crescentus).